A 405-amino-acid polypeptide reads, in one-letter code: Argininosuccinate synthase (405 aa).

Residues 10–18 and Ala37 each bind ATP; that span reads AFSGGLDTS. Residues Tyr90 and Ser95 each contribute to the L-citrulline site. Gly120 contributes to the ATP binding site. 3 residues coordinate L-aspartate: Thr122, Asn126, and Asp127. Asn126 contributes to the L-citrulline binding site. Residues Arg130, Ser181, Ser190, Glu266, and Tyr278 each coordinate L-citrulline.

The protein belongs to the argininosuccinate synthase family. Type 1 subfamily. Homotetramer.

Its subcellular location is the cytoplasm. The catalysed reaction is L-citrulline + L-aspartate + ATP = 2-(N(omega)-L-arginino)succinate + AMP + diphosphate + H(+). Its pathway is amino-acid biosynthesis; L-arginine biosynthesis; L-arginine from L-ornithine and carbamoyl phosphate: step 2/3. This chain is Argininosuccinate synthase, found in Rhizorhabdus wittichii (strain DSM 6014 / CCUG 31198 / JCM 15750 / NBRC 105917 / EY 4224 / RW1) (Sphingomonas wittichii).